A 322-amino-acid polypeptide reads, in one-letter code: Homoserine kinase (322 aa).

ATP is bound at residue P107–A117.

It belongs to the GHMP kinase family. Homoserine kinase subfamily.

It is found in the cytoplasm. It catalyses the reaction L-homoserine + ATP = O-phospho-L-homoserine + ADP + H(+). It participates in amino-acid biosynthesis; L-threonine biosynthesis; L-threonine from L-aspartate: step 4/5. Its function is as follows. Catalyzes the ATP-dependent phosphorylation of L-homoserine to L-homoserine phosphate. This is Homoserine kinase from Xylella fastidiosa (strain M23).